The primary structure comprises 89 residues: UPF0335 protein RPC_3979 (89 aa).

This sequence belongs to the UPF0335 family.

The chain is UPF0335 protein RPC_3979 from Rhodopseudomonas palustris (strain BisB18).